Consider the following 83-residue polypeptide: Mu-theraphotoxin-Hhn2j 2 (83 aa).

Residues 1 to 21 form the signal peptide; sequence MKASMFLALAGLVLLFVVGYA. Residues 22–48 constitute a propeptide that is removed on maturation; it reads SESEEKEFPIELLSKIFAVDVFKGEDR. Disulfide bonds link cysteine 50–cysteine 65, cysteine 57–cysteine 70, and cysteine 64–cysteine 77. Residue leucine 81 is modified to Leucine amide.

Belongs to the neurotoxin 10 (Hwtx-1) family. 15 (Hntx-3) subfamily. Monomer. Expressed by the venom gland.

It localises to the secreted. Its function is as follows. Lethal neurotoxin. Selectively blocks tetrodotoxin-sensitive voltage-gated sodium channels (Nav). Does not affect tetrodotoxin-resistant voltage-gated sodium channels or calcium channels. The protein is Mu-theraphotoxin-Hhn2j 2 of Cyriopagopus hainanus (Chinese bird spider).